The following is a 78-amino-acid chain: MEFREQVLDLLAEVAENNIVKENPDVEIFEEGIIDSFQTVGLLLEIQNKLDIEVSIMDFDRDEWATPNKIVEALEELR.

The Carrier domain occupies 1-78 (MEFREQVLDL…KIVEALEELR (78 aa)). Ser36 is subject to O-(pantetheine 4'-phosphoryl)serine.

The protein belongs to the DltC family. Post-translationally, 4'-phosphopantetheine is transferred from CoA to a specific serine of apo-DCP.

The protein localises to the cytoplasm. It functions in the pathway cell wall biogenesis; lipoteichoic acid biosynthesis. In terms of biological role, carrier protein involved in the D-alanylation of lipoteichoic acid (LTA). The loading of thioester-linked D-alanine onto DltC is catalyzed by D-alanine--D-alanyl carrier protein ligase DltA. The DltC-carried D-alanyl group is further transferred to cell membrane phosphatidylglycerol (PG) by forming an ester bond, probably catalyzed by DltD. D-alanylation of LTA plays an important role in modulating the properties of the cell wall in Gram-positive bacteria, influencing the net charge of the cell wall. This chain is D-alanyl carrier protein, found in Staphylococcus epidermidis (strain ATCC 35984 / DSM 28319 / BCRC 17069 / CCUG 31568 / BM 3577 / RP62A).